We begin with the raw amino-acid sequence, 314 residues long: 4-hydroxy-3-methylbut-2-enyl diphosphate reductase (314 aa).

A [4Fe-4S] cluster-binding site is contributed by C12. The (2E)-4-hydroxy-3-methylbut-2-enyl diphosphate site is built by H43 and H81. Positions 43 and 81 each coordinate dimethylallyl diphosphate. Isopentenyl diphosphate contacts are provided by H43 and H81. [4Fe-4S] cluster is bound at residue C103. H131 lines the (2E)-4-hydroxy-3-methylbut-2-enyl diphosphate pocket. H131 is a dimethylallyl diphosphate binding site. An isopentenyl diphosphate-binding site is contributed by H131. The active-site Proton donor is E133. T170 is a binding site for (2E)-4-hydroxy-3-methylbut-2-enyl diphosphate. Residue C198 coordinates [4Fe-4S] cluster. The (2E)-4-hydroxy-3-methylbut-2-enyl diphosphate site is built by S226, N228, and S271. Positions 226, 228, and 271 each coordinate dimethylallyl diphosphate. Isopentenyl diphosphate contacts are provided by S226, N228, and S271.

It belongs to the IspH family. It depends on [4Fe-4S] cluster as a cofactor.

It catalyses the reaction isopentenyl diphosphate + 2 oxidized [2Fe-2S]-[ferredoxin] + H2O = (2E)-4-hydroxy-3-methylbut-2-enyl diphosphate + 2 reduced [2Fe-2S]-[ferredoxin] + 2 H(+). It carries out the reaction dimethylallyl diphosphate + 2 oxidized [2Fe-2S]-[ferredoxin] + H2O = (2E)-4-hydroxy-3-methylbut-2-enyl diphosphate + 2 reduced [2Fe-2S]-[ferredoxin] + 2 H(+). It functions in the pathway isoprenoid biosynthesis; dimethylallyl diphosphate biosynthesis; dimethylallyl diphosphate from (2E)-4-hydroxy-3-methylbutenyl diphosphate: step 1/1. The protein operates within isoprenoid biosynthesis; isopentenyl diphosphate biosynthesis via DXP pathway; isopentenyl diphosphate from 1-deoxy-D-xylulose 5-phosphate: step 6/6. Catalyzes the conversion of 1-hydroxy-2-methyl-2-(E)-butenyl 4-diphosphate (HMBPP) into a mixture of isopentenyl diphosphate (IPP) and dimethylallyl diphosphate (DMAPP). Acts in the terminal step of the DOXP/MEP pathway for isoprenoid precursor biosynthesis. This Bacillus licheniformis (strain ATCC 14580 / DSM 13 / JCM 2505 / CCUG 7422 / NBRC 12200 / NCIMB 9375 / NCTC 10341 / NRRL NRS-1264 / Gibson 46) protein is 4-hydroxy-3-methylbut-2-enyl diphosphate reductase.